We begin with the raw amino-acid sequence, 360 residues long: Photosystem II protein D1 2 (360 aa).

3 consecutive transmembrane segments (helical) span residues 29–46, 118–133, and 142–156; these read YVGWFGVLMIPTLLTATT, HFLIGVFCYMGREWEL, and WICVAFSAPVAAATA. Residue H118 participates in chlorophyll a binding. Residue Y126 coordinates pheophytin a. D170 and E189 together coordinate [CaMn4O5] cluster. Residues 197-218 traverse the membrane as a helical segment; sequence FHMLGVAGVFGGSLFSAMHGSL. Residue H198 participates in chlorophyll a binding. A quinone contacts are provided by residues H215 and 264–265; that span reads SF. H215 is a Fe cation binding site. H272 is a binding site for Fe cation. The chain crosses the membrane as a helical span at residues 274 to 288; the sequence is FLGAWPVVGIWFTAL. Residues H332, E333, D342, and A344 each coordinate [CaMn4O5] cluster. Positions 345–360 are excised as a propeptide; sequence AGEQAPVALQAPAING.

This sequence belongs to the reaction center PufL/M/PsbA/D family. In terms of assembly, PSII is composed of 1 copy each of membrane proteins PsbA, PsbB, PsbC, PsbD, PsbE, PsbF, PsbH, PsbI, PsbJ, PsbK, PsbL, PsbM, PsbT, PsbX, PsbY, PsbZ, Psb30/Ycf12, peripheral proteins PsbO, CyanoQ (PsbQ), PsbU, PsbV and a large number of cofactors. It forms dimeric complexes. The D1/D2 heterodimer binds P680, chlorophylls that are the primary electron donor of PSII, and subsequent electron acceptors. It shares a non-heme iron and each subunit binds pheophytin, quinone, additional chlorophylls, carotenoids and lipids. D1 provides most of the ligands for the Mn4-Ca-O5 cluster of the oxygen-evolving complex (OEC). There is also a Cl(-1) ion associated with D1 and D2, which is required for oxygen evolution. The PSII complex binds additional chlorophylls, carotenoids and specific lipids. is required as a cofactor. Tyr-161 forms a radical intermediate that is referred to as redox-active TyrZ, YZ or Y-Z. Post-translationally, C-terminally processed by CtpA; processing is essential to allow assembly of the oxygen-evolving complex and thus photosynthetic growth.

The protein localises to the cellular thylakoid membrane. It carries out the reaction 2 a plastoquinone + 4 hnu + 2 H2O = 2 a plastoquinol + O2. Its function is as follows. Photosystem II (PSII) is a light-driven water:plastoquinone oxidoreductase that uses light energy to abstract electrons from H(2)O, generating O(2) and a proton gradient subsequently used for ATP formation. It consists of a core antenna complex that captures photons, and an electron transfer chain that converts photonic excitation into a charge separation. The D1/D2 (PsbA/PsbD) reaction center heterodimer binds P680, the primary electron donor of PSII as well as several subsequent electron acceptors. The chain is Photosystem II protein D1 2 from Picosynechococcus sp. (strain ATCC 27264 / PCC 7002 / PR-6) (Agmenellum quadruplicatum).